A 301-amino-acid chain; its full sequence is Putative S-adenosyl-L-methionine-dependent methyltransferase MMAR_4850 (301 aa).

S-adenosyl-L-methionine contacts are provided by residues D127 and 156–157; that span reads DL.

The protein belongs to the UPF0677 family.

In terms of biological role, exhibits S-adenosyl-L-methionine-dependent methyltransferase activity. The chain is Putative S-adenosyl-L-methionine-dependent methyltransferase MMAR_4850 from Mycobacterium marinum (strain ATCC BAA-535 / M).